Reading from the N-terminus, the 552-residue chain is CTP synthase (552 aa).

Residues 1-271 are amidoligase domain; it reads MASAASSKHL…DAFVVRRLGL (271 aa). S18 provides a ligand contact to CTP. S18 contributes to the UTP binding site. ATP is bound by residues 19-24 and D76; that span reads SLGKGL. Mg(2+)-binding residues include D76 and E145. Residues 152-154, 192-197, and K228 each bind CTP; these read DIE and KTKPTQ. UTP is bound by residues 192 to 197 and K228; that span reads KTKPTQ. Residues 296-546 enclose the Glutamine amidotransferase type-1 domain; that stretch reads TIALVGKYVD…IEAALKYSAG (251 aa). G359 contacts L-glutamine. The active-site Nucleophile; for glutamine hydrolysis is C386. Residues 387–390, E410, and R472 each bind L-glutamine; that span reads LGLQ. Residues H519 and E521 contribute to the active site.

Belongs to the CTP synthase family. Homotetramer.

The enzyme catalyses UTP + L-glutamine + ATP + H2O = CTP + L-glutamate + ADP + phosphate + 2 H(+). The catalysed reaction is L-glutamine + H2O = L-glutamate + NH4(+). It carries out the reaction UTP + NH4(+) + ATP = CTP + ADP + phosphate + 2 H(+). The protein operates within pyrimidine metabolism; CTP biosynthesis via de novo pathway; CTP from UDP: step 2/2. With respect to regulation, allosterically activated by GTP, when glutamine is the substrate; GTP has no effect on the reaction when ammonia is the substrate. The allosteric effector GTP functions by stabilizing the protein conformation that binds the tetrahedral intermediate(s) formed during glutamine hydrolysis. Inhibited by the product CTP, via allosteric rather than competitive inhibition. In terms of biological role, catalyzes the ATP-dependent amination of UTP to CTP with either L-glutamine or ammonia as the source of nitrogen. Regulates intracellular CTP levels through interactions with the four ribonucleotide triphosphates. This chain is CTP synthase, found in Thermobifida fusca (strain YX).